The chain runs to 301 residues: NADH-cytochrome b5 reductase 3 (301 aa).

Glycine 2 carries the N-myristoyl glycine lipid modification. An FAD-binding FR-type domain is found at 40 to 152 (DIKYPLRLID…RGPNGLLVYQ (113 aa)). Lysine 42 carries the N6-acetyllysine modification. Tyrosine 43 bears the Phosphotyrosine mark. Lysine 50 bears the N6-acetyllysine mark. FAD is bound by residues arginine 92, proline 93, tyrosine 94, valine 109, lysine 111, and phenylalanine 114. Residue lysine 120 is modified to N6-acetyllysine. Lysine 126, methionine 127, serine 128, and threonine 185 together coordinate FAD.

Belongs to the flavoprotein pyridine nucleotide cytochrome reductase family. In terms of assembly, component of a complex composed of cytochrome b5, NADH-cytochrome b5 reductase (CYB5R3) and MTARC2. Interacts with MTLN; the interaction is required to maintain cellular lipid composition and leads to stimulation of mitochondrial respiratory complex I activity. FAD serves as cofactor.

The protein localises to the endoplasmic reticulum membrane. Its subcellular location is the mitochondrion outer membrane. The enzyme catalyses 2 Fe(III)-[cytochrome b5] + NADH = 2 Fe(II)-[cytochrome b5] + NAD(+) + H(+). Its function is as follows. Catalyzes the reduction of two molecules of cytochrome b5 using NADH as the electron donor. The polypeptide is NADH-cytochrome b5 reductase 3 (CYB5R3) (Bos taurus (Bovine)).